Consider the following 862-residue polypeptide: Leucine--tRNA ligase (862 aa).

A 'HIGH' region motif is present at residues 44–54 (PYPSGRIHMGH). Positions 622–626 (KMSKS) match the 'KMSKS' region motif. Residue lysine 625 participates in ATP binding.

The protein belongs to the class-I aminoacyl-tRNA synthetase family.

Its subcellular location is the cytoplasm. The enzyme catalyses tRNA(Leu) + L-leucine + ATP = L-leucyl-tRNA(Leu) + AMP + diphosphate. The polypeptide is Leucine--tRNA ligase (Rhodospirillum rubrum (strain ATCC 11170 / ATH 1.1.1 / DSM 467 / LMG 4362 / NCIMB 8255 / S1)).